The sequence spans 50 residues: Temporin-SHb (50 aa).

The N-terminal stretch at phenylalanine 1 to cysteine 10 is a signal peptide. The propeptide occupies glutamate 11–arginine 35. Residues glutamine 12–glutamate 31 are disordered. The span at arginine 14 to valine 30 shows a compositional bias: acidic residues. Leucine 48 is subject to Leucine amide.

The protein belongs to the frog skin active peptide (FSAP) family. Temporin subfamily. In terms of tissue distribution, expressed by the skin glands.

The protein localises to the secreted. In terms of biological role, amphipathic alpha-helical peptide with no antimicrobial activity. Does not display anti-leishmania activity. Does not show hemolytic activity (LC(50)&gt;116 uM). The chain is Temporin-SHb from Pelophylax saharicus (Sahara frog).